A 125-amino-acid polypeptide reads, in one-letter code: Egg cell-secreted protein 1.3 (125 aa).

The signal sequence occupies residues 1–24 (MASNTSFLFVTVTLLLVLNVSSRA).

Belongs to the plant egg cell-secreted peptide family. In terms of tissue distribution, restricted to female reproductive tissues, specifically accumulating in storage vesicles of the unfertilized egg cell.

The protein localises to the cytoplasmic vesicle. The protein resides in the secreted. Functionally, involved in the regulation of gamete interactions during the double fertilization and to prevent multiple-pollen tube attraction; mediates the redistribution of the gamete fusogen HAP2/GCS1 to the cell surface after secretion upon sperm arrival. This is Egg cell-secreted protein 1.3 (EC1.3) from Arabidopsis thaliana (Mouse-ear cress).